The chain runs to 84 residues: Putative antitoxin VapB7 (84 aa).

In terms of biological role, antitoxin component of a possible type II toxin-antitoxin (TA) system. The cognate toxin is VapC7. This chain is Putative antitoxin VapB7 (vapB7), found in Mycobacterium tuberculosis (strain ATCC 25618 / H37Rv).